The following is a 255-amino-acid chain: Very-long-chain (3R)-3-hydroxyacyl-CoA dehydratase 2 (255 aa).

The Cytoplasmic segment spans residues 3–42; sequence AAAAATAAAKGNGGGGGRAGAGDASGTRKKKGPGPLATAY. Residues 11–34 form a disordered region; it reads AKGNGGGGGRAGAGDASGTRKKKG. Residues 13-22 are compositionally biased toward gly residues; sequence GNGGGGGRAG. Residues 43 to 61 traverse the membrane as a helical segment; that stretch reads LVIYNVVMTAGWLVIAVGL. The Lumenal portion of the chain corresponds to 62-80; the sequence is VRAYLAKGSYHSLYYSIEK. The chain crosses the membrane as a helical span at residues 81-98; sequence PLKFFQTGALLEILHCAI. At 99–108 the chain is on the cytoplasmic side; it reads GIVPSSVVLT. A helical transmembrane segment spans residues 109 to 126; it reads SFQVMSRVFLIWAVTHSV. Over 127–131 the chain is Lumenal; it reads KEVQS. The helical transmembrane segment at 132 to 147 threads the bilayer; that stretch reads EDSVLLFVIAWTITEI. Residues 148 to 170 lie on the Cytoplasmic side of the membrane; the sequence is IRYSFYTFSLLNHLPYLIKWARY. Residues 171–188 form a helical membrane-spanning segment; it reads TLFIVLYPMGVSGELLTI. Active-site residues include Tyr-177 and Glu-184. The Lumenal portion of the chain corresponds to 189 to 218; the sequence is YAALPFVRQAGLYSISLPNKYNFSFDYYAF. Positions 199–215 are may be involved in interaction with TECR; the sequence is GLYSISLPNKYNFSFDY. Asn-210 carries an N-linked (GlcNAc...) asparagine glycan. Residues 219–236 form a helical membrane-spanning segment; that stretch reads LILIMISYIPIFPQLYFH. Over 237-255 the chain is Cytoplasmic; sequence MIHQRRKILSHTEEHKKFE.

Belongs to the very long-chain fatty acids dehydratase HACD family. In terms of assembly, may interact with enzymes of the ELO family (including ELOVL1); with those enzymes that mediate condensation, the first of the four steps of the reaction cycle responsible for fatty acids elongation, may be part of a larger fatty acids elongase complex. Interacts with BCAP31. Interacts (via the third lumenal loop) with TECR.

It localises to the endoplasmic reticulum membrane. It carries out the reaction a very-long-chain (3R)-3-hydroxyacyl-CoA = a very-long-chain (2E)-enoyl-CoA + H2O. It catalyses the reaction (3R)-hydroxyhexadecanoyl-CoA = (2E)-hexadecenoyl-CoA + H2O. The catalysed reaction is (3R)-hydroxyoctadecanoyl-CoA = (2E)-octadecenoyl-CoA + H2O. The enzyme catalyses (3R)-hydroxyeicosanoyl-CoA = (2E)-eicosenoyl-CoA + H2O. It carries out the reaction (3R)-hydroxydocosanoyl-CoA = (2E)-docosenoyl-CoA + H2O. It catalyses the reaction (3R)-hydroxytetracosanoyl-CoA = (2E)-tetracosenoyl-CoA + H2O. The catalysed reaction is (3R)-hydroxyhexacosanoyl-CoA = (2E)-hexacosenoyl-CoA + H2O. The protein operates within lipid metabolism; fatty acid biosynthesis. In terms of biological role, catalyzes the third of the very long-chain fatty acids (VLCFA) elongation four-step cycle (condensation, reduction, dehydration, and reduction). This endoplasmic reticulum-elongation process is characterized by the addition of two carbons to the lipid chain through each cycle. This enzyme catalyzes the dehydration of the 3-hydroxyacyl-CoA intermediate into trans-2,3-enoyl-CoA, within each cycle of elongation. Therefore, it participates in the production of various VLCFAs involved in multiple biological processes as precursors of membrane lipids and lipid mediators. The chain is Very-long-chain (3R)-3-hydroxyacyl-CoA dehydratase 2 from Pongo abelii (Sumatran orangutan).